Consider the following 64-residue polypeptide: Large ribosomal subunit protein bL33 (64 aa).

It belongs to the bacterial ribosomal protein bL33 family.

The sequence is that of Large ribosomal subunit protein bL33 from Parasynechococcus marenigrum (strain WH8102).